Reading from the N-terminus, the 359-residue chain is Phospho-N-acetylmuramoyl-pentapeptide-transferase (359 aa).

A run of 10 helical transmembrane segments spans residues 3-23, 53-73, 84-104, 117-137, 156-176, 187-207, 231-251, 255-275, 283-303, and 330-350; these read QILFAAGIALAVSILLTPVLI, GGVAILAGLWAGYWGSHLIGI, GLLVLGLTTALGGVGFLDDFI, TAKLVGQLIAAVAFGILALQF, IATVTMGSVVFVAFCYLLVSA, LDGLAAGSMSLVLGAYVIITF, LALICAAGAGACIGFLWWNAA, IFMGDTGSLALGGMLAGLSIT, VVIGALFVAEAASVVIQVAVF, and VIIRFWLLAAIASAIGLALFY.

The protein belongs to the glycosyltransferase 4 family. MraY subfamily. It depends on Mg(2+) as a cofactor.

The protein resides in the cell membrane. The enzyme catalyses UDP-N-acetyl-alpha-D-muramoyl-L-alanyl-gamma-D-glutamyl-meso-2,6-diaminopimeloyl-D-alanyl-D-alanine + di-trans,octa-cis-undecaprenyl phosphate = di-trans,octa-cis-undecaprenyl diphospho-N-acetyl-alpha-D-muramoyl-L-alanyl-D-glutamyl-meso-2,6-diaminopimeloyl-D-alanyl-D-alanine + UMP. Its pathway is cell wall biogenesis; peptidoglycan biosynthesis. Its function is as follows. Catalyzes the initial step of the lipid cycle reactions in the biosynthesis of the cell wall peptidoglycan: transfers peptidoglycan precursor phospho-MurNAc-pentapeptide from UDP-MurNAc-pentapeptide onto the lipid carrier undecaprenyl phosphate, yielding undecaprenyl-pyrophosphoryl-MurNAc-pentapeptide, known as lipid I. This is Phospho-N-acetylmuramoyl-pentapeptide-transferase from Rhodococcus opacus (strain B4).